We begin with the raw amino-acid sequence, 508 residues long: Cobalamin biosynthesis protein CobIJ (508 aa).

The precorrin-2 C20-methyltransferase stretch occupies residues 1–243 (MSARGTLWGV…AMLPGGRRRA (243 aa)). Residues 244-508 (LLTGTVAVVG…TATKSSRHSD (265 aa)) form a precorrin-3 methylase region. Positions 489–508 (PRRYPEAGRATATKSSRHSD) are disordered.

This sequence belongs to the precorrin methyltransferase family.

It catalyses the reaction precorrin-2 + S-adenosyl-L-methionine = precorrin-3A + S-adenosyl-L-homocysteine + H(+). The catalysed reaction is precorrin-3B + S-adenosyl-L-methionine = precorrin-4 + S-adenosyl-L-homocysteine + 3 H(+). The protein operates within cofactor biosynthesis; adenosylcobalamin biosynthesis; cob(II)yrinate a,c-diamide from precorrin-2 (aerobic route): step 1/10. It functions in the pathway cofactor biosynthesis; adenosylcobalamin biosynthesis; cob(II)yrinate a,c-diamide from precorrin-2 (aerobic route): step 3/10. Its function is as follows. Methylates precorrin-2 at the C-20 position to produce precorrin-3A. This chain is Cobalamin biosynthesis protein CobIJ (cobIJ), found in Mycobacterium bovis (strain ATCC BAA-935 / AF2122/97).